Consider the following 719-residue polypeptide: NF-kappa-B inhibitor zeta (719 aa).

Residues 46–81 (GACDGGCSASGPSAPGSPGSDSSDFSSASSVSSCGA) are compositionally biased toward low complexity. The tract at residues 46–97 (GACDGGCSASGPSAPGSPGSDSSDFSSASSVSSCGAVESRPRGGARAERLQV) is disordered. Residues 84 to 97 (SRPRGGARAERLQV) are compositionally biased toward basic and acidic residues. In terms of domain architecture, OCA spans 108-130 (RGPFQGVRVKNSVKELLLHIRSH). The Nuclear localization signal signature appears at 164-179 (KRKGSDSLSDGPACKR). 2 disordered regions span residues 188 to 210 (LTPP…ESKQ) and 289 to 343 (YSPQ…FAPL). The span at 201–210 (EDVHHNESKQ) shows a compositional bias: basic and acidic residues. Positions 322 to 394 (SYEPHLFGRE…LARPDASSTP (73 aa)) are required for transcriptional activity. Residues 405–719 (GGNPMSTTQL…KSIQQRAPPY (315 aa)) form an interaction with NFKB1/p50 region. ANK repeat units lie at residues 444-473 (DGDT…ALHM), 480-509 (NGQS…QVNT), 513-542 (WGRT…GSNQ), 552-581 (DGLT…HSPE), 583-608 (QELL…AVEA), 613-642 (SGRT…CLSF), and 649-682 (NGNT…DPST).

In terms of assembly, interacts with NFKB1/p50. Interacts with RELA. Interacts with AKIRIN2.

It localises to the nucleus. Its function is as follows. Involved in regulation of NF-kappa-B transcription factor complexes. Inhibits NF-kappa-B activity without affecting its nuclear translocation upon stimulation. Inhibits DNA-binding of RELA and NFKB1/p50, and of the NF-kappa-B p65-p50 heterodimer and the NF-kappa-B p50-p50 homodimer. Also seems to activate NF-kappa-B-mediated transcription. In vitro, upon association with NFKB1/p50 has transcriptional activation activity and, together with NFKB1/p50 and RELA, is recruited to LCN2 promoters. Promotes transcription of LCN2 and DEFB4. Is recruited to IL-6 promoters and activates IL-6 but decreases TNF-alpha production in response to LPS. Seems to be involved in the induction of inflammatory genes activated through TLR/IL-1 receptor signaling. Involved in the induction of T helper 17 cells (Th17) differentiation upon recognition of antigen by T cell antigen receptor (TCR). This is NF-kappa-B inhibitor zeta (NFKBIZ) from Bos taurus (Bovine).